A 181-amino-acid chain; its full sequence is MAKFLDSIAGFGVTFGSMFKKTVTEEYPEKPGPVAPRYHGRHQLNRYPDGLEKCIGCELCAWACPADAIYVEGADNTDEQRFSPGERYGRVYQINYLRCIGCGLCIEACPTRALTMTNDYELADDNRADLIYEKDRLLAPLQPEMTAPPHPRAAGATDKDYYLGNVTAEGLRETQKTGESR.

2 4Fe-4S ferredoxin-type domains span residues 44–74 (LNRY…VEGA) and 90–119 (RVYQ…MTND). Residues cysteine 54, cysteine 57, cysteine 60, cysteine 64, cysteine 99, cysteine 102, cysteine 105, and cysteine 109 each contribute to the [4Fe-4S] cluster site.

The protein belongs to the complex I 23 kDa subunit family. As to quaternary structure, NDH-1 is composed of 14 different subunits. Subunits NuoA, H, J, K, L, M, N constitute the membrane sector of the complex. [4Fe-4S] cluster serves as cofactor.

It localises to the cell membrane. It carries out the reaction a quinone + NADH + 5 H(+)(in) = a quinol + NAD(+) + 4 H(+)(out). In terms of biological role, NDH-1 shuttles electrons from NADH, via FMN and iron-sulfur (Fe-S) centers, to quinones in the respiratory chain. The immediate electron acceptor for the enzyme in this species is believed to be menaquinone. Couples the redox reaction to proton translocation (for every two electrons transferred, four hydrogen ions are translocated across the cytoplasmic membrane), and thus conserves the redox energy in a proton gradient. This chain is NADH-quinone oxidoreductase subunit I, found in Mycobacterium marinum (strain ATCC BAA-535 / M).